Here is a 330-residue protein sequence, read N- to C-terminus: Fructose-1,6-bisphosphatase class 1 (330 aa).

4 residues coordinate Mg(2+): glutamate 84, aspartate 103, leucine 105, and aspartate 106. Substrate contacts are provided by residues 106 to 109 (DGSS), asparagine 196, and lysine 262. Glutamate 268 lines the Mg(2+) pocket.

The protein belongs to the FBPase class 1 family. As to quaternary structure, homotetramer. Mg(2+) is required as a cofactor.

It is found in the cytoplasm. The enzyme catalyses beta-D-fructose 1,6-bisphosphate + H2O = beta-D-fructose 6-phosphate + phosphate. It participates in carbohydrate biosynthesis; gluconeogenesis. The protein is Fructose-1,6-bisphosphatase class 1 of Shewanella sp. (strain ANA-3).